The sequence spans 431 residues: MAQFYSAKRRVTTRQIITVKVNDLDSFGQGVARHNGKALFIPGLLPEESAEVIITEDKKQFARARVSRRLNDSPERETPRCPHFGVCGGCQQQHVSIALQQRSKSAALARLMKHEVKDIIAGAPWGYRRRARLSLNCPPDKPLQMGFRKAGSSDIVNVEQCPVLAPQLAALLPRIRACLASLHGTRHLGHVELVQAGSGTLMILRHTAPLSAADKEKLERFSHSEGLSLFLAPFSEILETVSGEAPWYDSHGLRLAFSPRDFIQVNEAVNQQMVARALEWLDVRAEDRVLDLFCGMGNFTLPLATRAASVVGVEGVPALVEKGRENAIRNGLHNVTFFHENLEEDVTKQPWAKNGFDKVLLDPARAGATGVMRHIIKLKPIRIVYVSCNPATLARDSEALVNAGYEVTRLAMLDMFPHTGHLESMVLFERM.

Positions 10-68 constitute a TRAM domain; sequence RVTTRQIITVKVNDLDSFGQGVARHNGKALFIPGLLPEESAEVIITEDKKQFARARVSR. [4Fe-4S] cluster contacts are provided by Cys-81, Cys-87, Cys-90, and Cys-161. Residues Gln-264, Phe-293, Asn-298, Glu-314, Asn-341, and Asp-362 each coordinate S-adenosyl-L-methionine. Residue Cys-388 is the Nucleophile of the active site.

This sequence belongs to the class I-like SAM-binding methyltransferase superfamily. RNA M5U methyltransferase family. RlmD subfamily.

It catalyses the reaction uridine(1939) in 23S rRNA + S-adenosyl-L-methionine = 5-methyluridine(1939) in 23S rRNA + S-adenosyl-L-homocysteine + H(+). Catalyzes the formation of 5-methyl-uridine at position 1939 (m5U1939) in 23S rRNA. The polypeptide is 23S rRNA (uracil(1939)-C(5))-methyltransferase RlmD (Salmonella choleraesuis (strain SC-B67)).